Here is a 596-residue protein sequence, read N- to C-terminus: Aspartate--tRNA(Asp/Asn) ligase (596 aa).

Glutamate 172 is an L-aspartate binding site. The interval glutamine 196 to lysine 199 is aspartate. Position 218 (arginine 218) interacts with L-aspartate. ATP is bound by residues arginine 218–glutamate 220 and glutamine 227. Histidine 455 serves as a coordination point for L-aspartate. An ATP-binding site is contributed by glutamate 489. Arginine 496 contacts L-aspartate. Position 541 to 544 (glycine 541 to arginine 544) interacts with ATP.

The protein belongs to the class-II aminoacyl-tRNA synthetase family. Type 1 subfamily. Homodimer.

Its subcellular location is the cytoplasm. The catalysed reaction is tRNA(Asx) + L-aspartate + ATP = L-aspartyl-tRNA(Asx) + AMP + diphosphate. Its function is as follows. Aspartyl-tRNA synthetase with relaxed tRNA specificity since it is able to aspartylate not only its cognate tRNA(Asp) but also tRNA(Asn). Reaction proceeds in two steps: L-aspartate is first activated by ATP to form Asp-AMP and then transferred to the acceptor end of tRNA(Asp/Asn). This chain is Aspartate--tRNA(Asp/Asn) ligase, found in Bordetella bronchiseptica (strain ATCC BAA-588 / NCTC 13252 / RB50) (Alcaligenes bronchisepticus).